Consider the following 176-residue polypeptide: ATP-dependent protease subunit HslV (176 aa).

Residue threonine 2 is part of the active site. Na(+)-binding residues include glycine 157, cysteine 160, and threonine 163.

Belongs to the peptidase T1B family. HslV subfamily. A double ring-shaped homohexamer of HslV is capped on each side by a ring-shaped HslU homohexamer. The assembly of the HslU/HslV complex is dependent on binding of ATP.

It is found in the cytoplasm. It carries out the reaction ATP-dependent cleavage of peptide bonds with broad specificity.. Allosterically activated by HslU binding. In terms of biological role, protease subunit of a proteasome-like degradation complex believed to be a general protein degrading machinery. In Photorhabdus laumondii subsp. laumondii (strain DSM 15139 / CIP 105565 / TT01) (Photorhabdus luminescens subsp. laumondii), this protein is ATP-dependent protease subunit HslV.